A 637-amino-acid polypeptide reads, in one-letter code: MIYHFTEEYDIIVIGAGHAGVEASLAASRMGCKVLLATINIEMLAFMPCNPSIGGSAKGIVVREVDALGGEMAKTIDKTYIQMKMLNTGKGPAVRALRAQADKELYSKEMRKTVENQENLTLRQTMIDEILVEDGKAVGVRTATHQEYAAKAVIVTTGTALRGEIIIGDLKYSSGPNHSLASINLADNLKELGLEIGRFKTGTPPRVKASSINYDVTEIQPGDEVPNHFSYTSRDEDYVKDQVPCWLTYTNGTSHEIIQNNLHRAPMFTGVVKGVGPRYCPSIEDKIVRFADKERHQLFLEPEGRNTEEVYVQGLSTSLPEDVQRDLVHSIKGLENAEMMRTGYAIEYDMVLPHQLRATLETKKISGLFTAGQTNGTSGYEEAAGQGIIAGINAALKIQGKPELILKRSDGYIGVMIDDLVTKGTIEPYRLLTSRAEYRLILRHDNADMRLTEMGREIGLVDDERWARFEIKKNQFDNEMKRLDSIKLKPVKETNAKVEEMGFKPLTDAVTAKEFLRRPEVSYQDVVAFIGPAAEELDDKIIELIETEIKYEGYISKAMDQVAKMKRMEEKRIPANIDWDDIDSIATEARQKFKLINPETIGQASRISGVNPADISILMVYLEGKNRSISKTLQKSK.

FAD is bound by residues 15-20, I127, and S182; that span reads GAGHAG. Residue 276–290 coordinates NAD(+); that stretch reads GPRYCPSIEDKIVRF. An FAD-binding site is contributed by Q373.

Belongs to the MnmG family. Homodimer. Heterotetramer of two MnmE and two MnmG subunits. The cofactor is FAD.

The protein localises to the cytoplasm. NAD-binding protein involved in the addition of a carboxymethylaminomethyl (cmnm) group at the wobble position (U34) of certain tRNAs, forming tRNA-cmnm(5)s(2)U34. This is tRNA uridine 5-carboxymethylaminomethyl modification enzyme MnmG from Streptococcus pneumoniae (strain ATCC BAA-255 / R6).